Consider the following 360-residue polypeptide: Phospho-N-acetylmuramoyl-pentapeptide-transferase (360 aa).

10 consecutive transmembrane segments (helical) span residues Ser26–Asn46, Thr73–Leu93, Val98–Trp118, Trp132–Gly152, Val168–Ser188, Gly199–Thr219, Ser236–Tyr256, Val263–Leu283, Leu288–Val308, and Val338–Lys358.

Belongs to the glycosyltransferase 4 family. MraY subfamily. The cofactor is Mg(2+).

The protein localises to the cell inner membrane. It carries out the reaction UDP-N-acetyl-alpha-D-muramoyl-L-alanyl-gamma-D-glutamyl-meso-2,6-diaminopimeloyl-D-alanyl-D-alanine + di-trans,octa-cis-undecaprenyl phosphate = di-trans,octa-cis-undecaprenyl diphospho-N-acetyl-alpha-D-muramoyl-L-alanyl-D-glutamyl-meso-2,6-diaminopimeloyl-D-alanyl-D-alanine + UMP. Its pathway is cell wall biogenesis; peptidoglycan biosynthesis. In terms of biological role, catalyzes the initial step of the lipid cycle reactions in the biosynthesis of the cell wall peptidoglycan: transfers peptidoglycan precursor phospho-MurNAc-pentapeptide from UDP-MurNAc-pentapeptide onto the lipid carrier undecaprenyl phosphate, yielding undecaprenyl-pyrophosphoryl-MurNAc-pentapeptide, known as lipid I. This is Phospho-N-acetylmuramoyl-pentapeptide-transferase from Haemophilus ducreyi (strain 35000HP / ATCC 700724).